The sequence spans 357 residues: Phosphoribosylformylglycinamidine cyclo-ligase (357 aa).

The protein belongs to the AIR synthase family.

Its subcellular location is the cytoplasm. The enzyme catalyses 2-formamido-N(1)-(5-O-phospho-beta-D-ribosyl)acetamidine + ATP = 5-amino-1-(5-phospho-beta-D-ribosyl)imidazole + ADP + phosphate + H(+). The protein operates within purine metabolism; IMP biosynthesis via de novo pathway; 5-amino-1-(5-phospho-D-ribosyl)imidazole from N(2)-formyl-N(1)-(5-phospho-D-ribosyl)glycinamide: step 2/2. The protein is Phosphoribosylformylglycinamidine cyclo-ligase of Rhodopseudomonas palustris (strain BisB18).